A 375-amino-acid chain; its full sequence is N5-carboxyaminoimidazole ribonucleotide synthase (375 aa).

Residues R108, K148, 153 to 159, 183 to 186, E191, H214, and 266 to 267 contribute to the ATP site; these read GYDGKGQ, EQYL, and NE. Positions 112-296 constitute an ATP-grasp domain; that stretch reads KQTLLEANTQ…QFDTHILAIT (185 aa).

This sequence belongs to the PurK/PurT family. In terms of assembly, homodimer.

The enzyme catalyses 5-amino-1-(5-phospho-beta-D-ribosyl)imidazole + hydrogencarbonate + ATP = 5-carboxyamino-1-(5-phospho-D-ribosyl)imidazole + ADP + phosphate + 2 H(+). It participates in purine metabolism; IMP biosynthesis via de novo pathway; 5-amino-1-(5-phospho-D-ribosyl)imidazole-4-carboxylate from 5-amino-1-(5-phospho-D-ribosyl)imidazole (N5-CAIR route): step 1/2. Catalyzes the ATP-dependent conversion of 5-aminoimidazole ribonucleotide (AIR) and HCO(3)(-) to N5-carboxyaminoimidazole ribonucleotide (N5-CAIR). The polypeptide is N5-carboxyaminoimidazole ribonucleotide synthase (Staphylococcus epidermidis (strain ATCC 35984 / DSM 28319 / BCRC 17069 / CCUG 31568 / BM 3577 / RP62A)).